Here is a 650-residue protein sequence, read N- to C-terminus: Chaperone protein DnaK (650 aa).

A Phosphothreonine; by autocatalysis modification is found at threonine 200. The disordered stretch occupies residues 613–634; that stretch reads QAGAAGAAGAAEGAAHAGGAQQ.

This sequence belongs to the heat shock protein 70 family.

Functionally, acts as a chaperone. The protein is Chaperone protein DnaK of Burkholderia vietnamiensis (strain G4 / LMG 22486) (Burkholderia cepacia (strain R1808)).